Here is a 594-residue protein sequence, read N- to C-terminus: Suppressor of hairless protein (594 aa).

Positions 20 to 87 are disordered; the sequence is ETTVVNPNGS…QQQQQHQQQM (68 aa). The span at 58–87 shows a compositional bias: low complexity; that stretch reads QQQQQQLQVHHQQQQQQQQQQQQQQHQQQM. 3 DNA-binding regions span residues 131-141, 239-244, and 266-271; these read QKSYGNEKRFF, SKPSKK, and RLRSQT. The IPT/TIG domain maps to 429–519; the sequence is PIVNSLNLNG…YATGLTFTYT (91 aa). 2 stretches are compositionally biased toward low complexity: residues 542-562 and 569-580; these read NNNN…AGSP and QQQQQQHQALPS. Residues 542–594 form a disordered region; that stretch reads NNNNNITSISNNNNSNNAGSPAAGGGLQQQQQQHQALPSISEVQWNSHGSGLS. Over residues 582–594 the composition is skewed to polar residues; the sequence is SEVQWNSHGSGLS.

The protein belongs to the Su(H) family. As to quaternary structure, interacts with activated cleaved Notch. Interacts with Hairless, this interaction preventing its DNA-binding activity. Interacts with insv (via BEN domain).

Its subcellular location is the nucleus. It is found in the cytoplasm. Transcriptional regulator that plays a central role in Notch signaling, a signaling pathway involved in cell-cell communication that regulates a broad spectrum of cell-fate determinations. Binds directly the 5'-GTGRGAR-3' DNA consensus sequence, which is present in the regulatory region of several genes. Acts as a transcriptional repressor when it is not associated with Notch proteins. When associated with some Notch protein, it acts as a transcriptional activator that activates transcription of Notch target genes. Required for transcription of Sim. Specifically binds to the immunoglobulin kappa-type J segment recombination signal sequence. Required for neurogenesis in imaginal disks. In the larval brain, might play a role as a transducer of Notch signaling during type II neuroblast development. Also functions independently of the Notch pathway, in the development of the bristle sensory organ precursor cell. This chain is Suppressor of hairless protein (Su(H)), found in Drosophila melanogaster (Fruit fly).